The chain runs to 295 residues: Keratin-like protein KRT222 (295 aa).

The region spanning 1-150 (MELSQLLNEI…HLLEKEEIRY (150 aa)) is the IF rod domain. Positions 2 to 150 (ELSQLLNEIR…HLLEKEEIRY (149 aa)) form a coiled coil.

Belongs to the intermediate filament family.

This is Keratin-like protein KRT222 (KRT222) from Homo sapiens (Human).